The chain runs to 205 residues: Probable thymidylate kinase (205 aa).

ATP is bound at residue 9 to 16; sequence GIDGVGKS.

This sequence belongs to the thymidylate kinase family.

The catalysed reaction is dTMP + ATP = dTDP + ADP. The sequence is that of Probable thymidylate kinase from Caldivirga maquilingensis (strain ATCC 700844 / DSM 13496 / JCM 10307 / IC-167).